Here is a 247-residue protein sequence, read N- to C-terminus: TLC domain-containing protein 1 (247 aa).

The signal sequence occupies residues 1–27 (MPLLLHPAWPLLLGATLTFRALRRVLC). The Extracellular portion of the chain corresponds to 28–46 (RLPLPAHVQTDPLRTWRWH). The TLC domain maps to 40–234 (LRTWRWHNLL…LLRSDFCPER (195 aa)). The helical transmembrane segment at 47 to 67 (NLLVSFTHSIVSGIWALLCIW) threads the bilayer. The Cytoplasmic portion of the chain corresponds to 68 to 83 (QTPEMLVEIETAWSVC). A helical transmembrane segment spans residues 84–104 (GYLLVCFSAGYFIHDTVDIVV). Residues 105 to 123 (SRQTRASWEYLVHHVMAMG) lie on the Extracellular side of the membrane. An intramembrane region (helical) is located at residues 124 to 144 (AFFSGIFWKRFVGGGVLTLLV). The Extracellular segment spans residues 145–173 (EVSNIFLTLRMMMKINNAQDILLYKVNKY). A helical membrane pass occupies residues 174 to 194 (VNLVMYFLFRLAPQAYLTKFF). Over 195 to 201 (LQYAGQR) the chain is Cytoplasmic. A helical membrane pass occupies residues 202–222 (TLGTFLLSILLMLDVMILIYF). At 223–247 (SRLLRSDFCPERAPSRQQKDKFLTE) the chain is on the extracellular side.

It is found in the cell membrane. Regulates the composition and fluidity of the plasma membrane. Inhibits the incorporation of membrane-fluidizing phospholipids containing omega-3 long-chain polyunsaturated fatty acids (LCPUFA) and thereby promotes membrane rigidity. Does not appear to have any effect on LCPUFA synthesis. In Rattus norvegicus (Rat), this protein is TLC domain-containing protein 1 (Tlcd1).